Consider the following 151-residue polypeptide: High mobility group B protein 14 (151 aa).

Disordered regions lie at residues 1-62 (MTKR…QTKM) and 132-151 (TKRM…DYSE). Over residues 7 to 20 (KSGPLSPSCSGGSS) the composition is skewed to low complexity. The span at 35–56 (RSTRLRLQPLRKPKTSPKKKPV) shows a compositional bias: basic residues. Residues 63 to 132 (PKKPATAFFF…EFHRAMTEYT (70 aa)) constitute a DNA-binding region (HMG box). Residues 132–142 (TKRMESGAHDE) are compositionally biased toward basic and acidic residues. Serine 150 is subject to Phosphoserine.

It belongs to the HMGB family.

It localises to the nucleus. This chain is High mobility group B protein 14 (HMGB14), found in Arabidopsis thaliana (Mouse-ear cress).